The primary structure comprises 752 residues: Peptidyl-prolyl cis-trans isomerase G (752 aa).

Residues phenylalanine 11–glutamate 176 form the PPIase cyclophilin-type domain. The span at lysine 182–serine 193 shows a compositional bias: basic residues. The disordered stretch occupies residues lysine 182–glycine 752. Residues serine 194 to serine 214 are compositionally biased toward low complexity. Over residues arginine 226 to lysine 251 the composition is skewed to basic residues. 5 positions are modified to phosphoserine: serine 252, serine 254, serine 255, serine 257, and serine 288. Basic and acidic residues predominate over residues proline 290–cysteine 308. Serine 313 is subject to Phosphoserine. Over residues serine 327–serine 345 the composition is skewed to basic residues. Basic and acidic residues-rich tracts occupy residues arginine 346–arginine 366 and arginine 377–asparagine 447. Phosphoserine is present on serine 354. Threonine 356 bears the Phosphothreonine mark. Serine 384 carries the post-translational modification Phosphoserine. Residue lysine 390 forms a Glycyl lysine isopeptide (Lys-Gly) (interchain with G-Cter in SUMO2) linkage. 3 positions are modified to phosphoserine: serine 395, serine 411, and serine 413. Residues lysine 448–serine 461 are compositionally biased toward basic residues. Basic and acidic residues-rich tracts occupy residues lysine 462–lysine 552 and arginine 577–arginine 598. The span at arginine 599–aspartate 625 shows a compositional bias: basic residues. Over residues serine 626 to glutamine 684 the composition is skewed to basic and acidic residues. Serine 685 and serine 688 each carry phosphoserine. The span at serine 685 to lysine 705 shows a compositional bias: polar residues. Lysine 691 is covalently cross-linked (Glycyl lysine isopeptide (Lys-Gly) (interchain with G-Cter in SUMO2)). 3 positions are modified to phosphoserine: serine 694, serine 742, and serine 743. Residues asparagine 706 to glycine 752 show a composition bias toward basic and acidic residues. Threonine 746 is modified (phosphothreonine). Serine 751 bears the Phosphoserine mark.

As to quaternary structure, interacts with CLK1, PNN and with the phosphorylated C-terminal domain of RNA polymerase II.

It localises to the nucleus matrix. Its subcellular location is the nucleus speckle. It catalyses the reaction [protein]-peptidylproline (omega=180) = [protein]-peptidylproline (omega=0). Inhibited by cyclosporin A (CsA). PPIase that catalyzes the cis-trans isomerization of proline imidic peptide bonds in oligopeptides and may therefore assist protein folding. May be implicated in the folding, transport, and assembly of proteins. May play an important role in the regulation of pre-mRNA splicing. The polypeptide is Peptidyl-prolyl cis-trans isomerase G (Ppig) (Mus musculus (Mouse)).